Reading from the N-terminus, the 167-residue chain is Small ribosomal subunit protein uS5 (167 aa).

An S5 DRBM domain is found at 12 to 75; it reads LEDNVVAINR…EAARKNLIEV (64 aa).

The protein belongs to the universal ribosomal protein uS5 family. Part of the 30S ribosomal subunit. Contacts proteins S4 and S8.

Its function is as follows. With S4 and S12 plays an important role in translational accuracy. Located at the back of the 30S subunit body where it stabilizes the conformation of the head with respect to the body. This chain is Small ribosomal subunit protein uS5, found in Levilactobacillus brevis (strain ATCC 367 / BCRC 12310 / CIP 105137 / JCM 1170 / LMG 11437 / NCIMB 947 / NCTC 947) (Lactobacillus brevis).